Here is a 237-residue protein sequence, read N- to C-terminus: Ribonuclease PH (237 aa).

Residues R86 and 124 to 126 (GTR) each bind phosphate.

This sequence belongs to the RNase PH family. As to quaternary structure, homohexameric ring arranged as a trimer of dimers.

The enzyme catalyses tRNA(n+1) + phosphate = tRNA(n) + a ribonucleoside 5'-diphosphate. Its function is as follows. Phosphorolytic 3'-5' exoribonuclease that plays an important role in tRNA 3'-end maturation. Removes nucleotide residues following the 3'-CCA terminus of tRNAs; can also add nucleotides to the ends of RNA molecules by using nucleoside diphosphates as substrates, but this may not be physiologically important. Probably plays a role in initiation of 16S rRNA degradation (leading to ribosome degradation) during starvation. This Coxiella burnetii (strain RSA 331 / Henzerling II) protein is Ribonuclease PH.